We begin with the raw amino-acid sequence, 97 residues long: Large ribosomal subunit protein bL27 (97 aa).

The segment at 1–23 (MAHKKGASSSRNGRDSTSKRLGV) is disordered.

Belongs to the bacterial ribosomal protein bL27 family.

This Acidothermus cellulolyticus (strain ATCC 43068 / DSM 8971 / 11B) protein is Large ribosomal subunit protein bL27.